The chain runs to 132 residues: Insulin-like 3 (132 aa).

Residues 1-21 (MDRRPLTWALVLLGPALAIAL) form the signal peptide. Pyrrolidone carboxylic acid is present on Q27. 3 disulfide bridges follow: C34-C117, C46-C130, and C116-C121. A propeptide spans 67–104 (LLRWLEGQHLLHGLMASGDPVLVLAPQPLPQASRHHHH) (c peptide like).

The protein belongs to the insulin family. Heterodimer of a B chain and an A chain linked by two disulfide bonds. 20% of B chains include an extra N-terminal pentapeptide. As to expression, expressed exclusively in Leydig cells of the testis.

It localises to the secreted. In terms of biological role, seems to play a role in testicular function. May be a trophic hormone with a role in testicular descent in fetal life. Is a ligand for LGR8 receptor. This chain is Insulin-like 3 (INSL3), found in Bos taurus (Bovine).